The following is a 424-amino-acid chain: Serine--tRNA ligase (424 aa).

232-234 (TAE) provides a ligand contact to L-serine. 263 to 265 (RKE) serves as a coordination point for ATP. Glutamate 286 contributes to the L-serine binding site. Residue 350–353 (EISS) coordinates ATP. Serine 386 contributes to the L-serine binding site.

Belongs to the class-II aminoacyl-tRNA synthetase family. Type-1 seryl-tRNA synthetase subfamily. As to quaternary structure, homodimer. The tRNA molecule binds across the dimer.

The protein localises to the cytoplasm. It catalyses the reaction tRNA(Ser) + L-serine + ATP = L-seryl-tRNA(Ser) + AMP + diphosphate + H(+). It carries out the reaction tRNA(Sec) + L-serine + ATP = L-seryl-tRNA(Sec) + AMP + diphosphate + H(+). It participates in aminoacyl-tRNA biosynthesis; selenocysteinyl-tRNA(Sec) biosynthesis; L-seryl-tRNA(Sec) from L-serine and tRNA(Sec): step 1/1. Its function is as follows. Catalyzes the attachment of serine to tRNA(Ser). Is also able to aminoacylate tRNA(Sec) with serine, to form the misacylated tRNA L-seryl-tRNA(Sec), which will be further converted into selenocysteinyl-tRNA(Sec). This chain is Serine--tRNA ligase, found in Thermodesulfovibrio yellowstonii (strain ATCC 51303 / DSM 11347 / YP87).